Consider the following 395-residue polypeptide: Putative 8-amino-7-oxononanoate synthase (395 aa).

Substrate is bound at residue arginine 22. 109–110 (GY) serves as a coordination point for pyridoxal 5'-phosphate. Histidine 139 is a substrate binding site. Pyridoxal 5'-phosphate contacts are provided by residues serine 187, 212-215 (DEAH), and 241-244 (TFSK). Position 244 is an N6-(pyridoxal phosphate)lysine (lysine 244). Substrate is bound at residue threonine 358.

It belongs to the class-II pyridoxal-phosphate-dependent aminotransferase family. BioF subfamily. As to quaternary structure, homodimer. The cofactor is pyridoxal 5'-phosphate.

It catalyses the reaction 6-carboxyhexanoyl-[ACP] + L-alanine + H(+) = (8S)-8-amino-7-oxononanoate + holo-[ACP] + CO2. It participates in cofactor biosynthesis; biotin biosynthesis. In terms of biological role, catalyzes the decarboxylative condensation of pimeloyl-[acyl-carrier protein] and L-alanine to produce 8-amino-7-oxononanoate (AON), [acyl-carrier protein], and carbon dioxide. The chain is Putative 8-amino-7-oxononanoate synthase (bioF) from Magnetococcus marinus (strain ATCC BAA-1437 / JCM 17883 / MC-1).